The following is a 229-amino-acid chain: NAD(P)H-hydrate epimerase (229 aa).

A YjeF N-terminal domain is found at 10-224; that stretch reads SREVDQIAIE…DIGIPPALLD (215 aa). Residue 57-61 coordinates (6S)-NADPHX; the sequence is NNGGD. 2 residues coordinate K(+): Asn58 and Asp129. Residues 133–139 and Asp167 contribute to the (6S)-NADPHX site; that span reads GTGIRGQ. Ser170 contacts K(+).

The protein belongs to the NnrE/AIBP family. K(+) serves as cofactor.

It carries out the reaction (6R)-NADHX = (6S)-NADHX. It catalyses the reaction (6R)-NADPHX = (6S)-NADPHX. In terms of biological role, catalyzes the epimerization of the S- and R-forms of NAD(P)HX, a damaged form of NAD(P)H that is a result of enzymatic or heat-dependent hydration. This is a prerequisite for the S-specific NAD(P)H-hydrate dehydratase to allow the repair of both epimers of NAD(P)HX. This Rubinisphaera brasiliensis (strain ATCC 49424 / DSM 5305 / JCM 21570 / IAM 15109 / NBRC 103401 / IFAM 1448) (Planctomyces brasiliensis) protein is NAD(P)H-hydrate epimerase.